The sequence spans 199 residues: NAD(P)H dehydrogenase (quinone) (199 aa).

A Flavodoxin-like domain is found at 4–190; the sequence is VLVLYYSTYG…AGARHQGELV (187 aa). FMN is bound by residues 10 to 15 and 78 to 80; these read STYGHL and TRF. Tyr-12 is an NAD(+) binding site. Trp-98 contributes to the substrate binding site. Residues 113 to 119 and His-134 contribute to the FMN site; that span reads STATQHG.

Belongs to the WrbA family. FMN serves as cofactor.

It catalyses the reaction a quinone + NADH + H(+) = a quinol + NAD(+). It carries out the reaction a quinone + NADPH + H(+) = a quinol + NADP(+). The polypeptide is NAD(P)H dehydrogenase (quinone) (Azorhizobium caulinodans (strain ATCC 43989 / DSM 5975 / JCM 20966 / LMG 6465 / NBRC 14845 / NCIMB 13405 / ORS 571)).